The primary structure comprises 261 residues: Transmembrane protein 106A (261 aa).

The segment at 1–23 (MGKAVSQLTSRKDEDKPILPDNP) is disordered. A helical transmembrane segment spans residues 93–113 (LFVFLSVAICLLIFSLTIFFL).

The protein belongs to the TMEM106 family. As to expression, expressed in liver, spleen, lung, kidney, lymph nodes and adipose tissue (at protein level). Expressed by macrophages.

The protein resides in the cell membrane. Activates macrophages and polarizes them into M1-like macrophages through the activation of the MAPK and NF-kappaB signaling pathway. Upon activation, up-regulates the expression of CD80, CD86, CD69 and MHC II on macrophages, and induces the release of pro-inflammatory cytokines such as TNF, IL1B, IL6, CCL2 and nitric oxide. May play a role in inhibition of proliferation and migration. This chain is Transmembrane protein 106A (Tmem106a), found in Mus musculus (Mouse).